The chain runs to 267 residues: 4-hydroxy-tetrahydrodipicolinate reductase (267 aa).

Residues 8 to 13 and glutamate 34 each bind NAD(+); that span reads GAAGRM. Residue arginine 35 participates in NADP(+) binding. NAD(+)-binding positions include 98–100 and 122–125; these read GST and APNM. Histidine 155 (proton donor/acceptor) is an active-site residue. Histidine 156 serves as a coordination point for (S)-2,3,4,5-tetrahydrodipicolinate. The active-site Proton donor is the lysine 159. 165–166 provides a ligand contact to (S)-2,3,4,5-tetrahydrodipicolinate; it reads GT.

Belongs to the DapB family.

It is found in the cytoplasm. The catalysed reaction is (S)-2,3,4,5-tetrahydrodipicolinate + NAD(+) + H2O = (2S,4S)-4-hydroxy-2,3,4,5-tetrahydrodipicolinate + NADH + H(+). It carries out the reaction (S)-2,3,4,5-tetrahydrodipicolinate + NADP(+) + H2O = (2S,4S)-4-hydroxy-2,3,4,5-tetrahydrodipicolinate + NADPH + H(+). It functions in the pathway amino-acid biosynthesis; L-lysine biosynthesis via DAP pathway; (S)-tetrahydrodipicolinate from L-aspartate: step 4/4. Functionally, catalyzes the conversion of 4-hydroxy-tetrahydrodipicolinate (HTPA) to tetrahydrodipicolinate. In Pelobacter propionicus (strain DSM 2379 / NBRC 103807 / OttBd1), this protein is 4-hydroxy-tetrahydrodipicolinate reductase.